A 469-amino-acid chain; its full sequence is Calcium/calmodulin-dependent protein kinase type IV (469 aa).

A phosphoserine; by autocatalysis mark is found at serine 11 and serine 12. Residues 42-296 form the Protein kinase domain; that stretch reads FEVESELGRG…TFQALQHPWV (255 aa). Residues 48-56 and lysine 71 contribute to the ATP site; that span reads LGRGATSIV. A glycan (O-linked (GlcNAc) threonine) is linked at threonine 53. O-linked (GlcNAc) serine glycosylation occurs at serine 54. An O-linked (GlcNAc) serine glycan is attached at serine 133. Catalysis depends on aspartate 160, which acts as the Proton acceptor. Serine 185 carries an O-linked (GlcNAc) serine glycan. Threonine 196 carries the phosphothreonine modification. Residues 297 to 336 form an autoinhibitory domain region; sequence TGKAANFVHMDTAQKKLQEFNARRKLKAAVKAVVASSRLG. The tract at residues 302–319 is PP2A-binding; that stretch reads NFVHMDTAQKKLQEFNAR. Residues 318 to 337 are calmodulin-binding; that stretch reads ARRKLKAAVKAVVASSRLGS. Serine 332 is subject to Phosphoserine; by autocatalysis. A disordered region spans residues 336–469; it reads GSASSSHTSI…PQQDAIQPEY (134 aa). At serine 337 the chain carries Phosphoserine. O-linked (GlcNAc) serine glycans are attached at residues serine 340, serine 341, and serine 352. Over residues 360–374 the composition is skewed to basic and acidic residues; it reads DAKDSTDLLGKKMQE. Residues 375 to 388 show a composition bias toward acidic residues; it reads EDQEEDQVEAEASA. Positions 389 to 409 are enriched in basic and acidic residues; the sequence is DEMRKLQSEEVEKDAGVKEEE. Positions 417-426 are enriched in acidic residues; it reads DPEDELETDD. A compositionally biased stretch (basic and acidic residues) spans 427–441; that stretch reads PEMKRDSEEKLKSVE. Serine 433 and serine 439 each carry phosphoserine. Positions 442-453 are enriched in acidic residues; that stretch reads EEMDPMTEEEAP.

Belongs to the protein kinase superfamily. CAMK Ser/Thr protein kinase family. CaMK subfamily. In terms of assembly, monomer. Interacts with protein phosphatase 2A (PPP2CA/PPP2CB); the interaction is mutually exclusive with binding to Ca(2+)/calmodulin. Phosphorylated by CaMKK1 and CaMKK2 on Thr-196. Dephosphorylated by protein phosphatase 2A. Autophosphorylated on Ser-11 and Ser-12. Post-translationally, glycosylation at Ser-185 modulates the phosphorylation of CaMK4 at Thr-196 and negatively regulates its activity toward CREB1 in basal conditions and during early inomycin stimulation. Expressed in brain and testis.

The protein localises to the cytoplasm. Its subcellular location is the nucleus. The catalysed reaction is L-seryl-[protein] + ATP = O-phospho-L-seryl-[protein] + ADP + H(+). It catalyses the reaction L-threonyl-[protein] + ATP = O-phospho-L-threonyl-[protein] + ADP + H(+). Its activity is regulated as follows. Activated by Ca(2+)/calmodulin. Binding of calmodulin results in conformational change that relieves intrasteric autoinhibition and allows phosphorylation of Thr-196 within the activation loop by CaMKK1 or CaMKK2. Phosphorylation of Thr-196 results in a 10-20-fold increase in total activity to generate Ca(2+)/calmodulin-independent activity. Autophosphorylation of the N-terminus Ser-11 and Ser-12 is required for full activation. Inactivated by protein phosphatase 2A (PPP2CA/PPP2CB) which dephosphorylates Thr-196, thereby terminating autonomous activity and helping to maintain the enzyme in its autoinhibited state. Functionally, calcium/calmodulin-dependent protein kinase that operates in the calcium-triggered CaMKK-CaMK4 signaling cascade and regulates, mainly by phosphorylation, the activity of several transcription activators, such as CREB1, MEF2D, JUN and RORA, which play pivotal roles in immune response, inflammation, and memory consolidation. In the thymus, regulates the CD4(+)/CD8(+) double positive thymocytes selection threshold during T-cell ontogeny. In CD4 memory T-cells, is required to link T-cell antigen receptor (TCR) signaling to the production of IL2, IFNG and IL4 (through the regulation of CREB and MEF2). Regulates the differentiation and survival phases of osteoclasts and dendritic cells (DCs). Mediates DCs survival by linking TLR4 and the regulation of temporal expression of BCL2. Phosphorylates the transcription activator CREB1 on 'Ser-133' in hippocampal neuron nuclei and contribute to memory consolidation and long term potentiation (LTP) in the hippocampus. Can activate the MAP kinases MAPK1/ERK2, MAPK8/JNK1 and MAPK14/p38 and stimulate transcription through the phosphorylation of ELK1 and ATF2. Can also phosphorylate in vitro CREBBP, PRM2, MEF2A and STMN1/OP18. May be involved in spermatogenesis. The chain is Calcium/calmodulin-dependent protein kinase type IV (Camk4) from Mus musculus (Mouse).